A 902-amino-acid chain; its full sequence is HTH-type transcriptional regulator MalT (902 aa).

S39–T46 lines the ATP pocket. The region spanning E832–L897 is the HTH luxR-type domain. Residues N856–R875 constitute a DNA-binding region (H-T-H motif).

The protein belongs to the MalT family. Monomer in solution. Oligomerizes to an active state in the presence of the positive effectors ATP and maltotriose.

Its activity is regulated as follows. Activated by ATP and maltotriose, which are both required for DNA binding. Positively regulates the transcription of the maltose regulon whose gene products are responsible for uptake and catabolism of malto-oligosaccharides. Specifically binds to the promoter region of its target genes, recognizing a short DNA motif called the MalT box. In Vibrio campbellii (strain ATCC BAA-1116), this protein is HTH-type transcriptional regulator MalT.